The following is a 397-amino-acid chain: Riboflavin biosynthesis protein RibBA (397 aa).

The DHBP synthase stretch occupies residues Met1–His199. Residues Arg26 to Glu27, Asp31, Arg138 to Thr142, and Glu162 each bind D-ribulose 5-phosphate. Residue Glu27 coordinates Mg(2+). His141 contributes to the Mg(2+) binding site. A GTP cyclohydrolase II region spans residues His200–Leu397. Arg250–Glu254 provides a ligand contact to GTP. Zn(2+)-binding residues include Cys255, Cys266, and Cys268. Residues Gln271, Glu293–Arg295, and Thr315 contribute to the GTP site. Asp327 serves as the catalytic Proton acceptor; for GTP cyclohydrolase activity. Catalysis depends on Arg329, which acts as the Nucleophile; for GTP cyclohydrolase activity. The GTP site is built by Thr350 and Lys355.

The protein in the N-terminal section; belongs to the DHBP synthase family. This sequence in the C-terminal section; belongs to the GTP cyclohydrolase II family. Mg(2+) is required as a cofactor. The cofactor is Mn(2+). It depends on Zn(2+) as a cofactor.

The catalysed reaction is D-ribulose 5-phosphate = (2S)-2-hydroxy-3-oxobutyl phosphate + formate + H(+). It carries out the reaction GTP + 4 H2O = 2,5-diamino-6-hydroxy-4-(5-phosphoribosylamino)-pyrimidine + formate + 2 phosphate + 3 H(+). It functions in the pathway cofactor biosynthesis; riboflavin biosynthesis; 2-hydroxy-3-oxobutyl phosphate from D-ribulose 5-phosphate: step 1/1. It participates in cofactor biosynthesis; riboflavin biosynthesis; 5-amino-6-(D-ribitylamino)uracil from GTP: step 1/4. Its function is as follows. Catalyzes the conversion of D-ribulose 5-phosphate to formate and 3,4-dihydroxy-2-butanone 4-phosphate. Catalyzes the conversion of GTP to 2,5-diamino-6-ribosylamino-4(3H)-pyrimidinone 5'-phosphate (DARP), formate and pyrophosphate. In Bacillus cytotoxicus (strain DSM 22905 / CIP 110041 / 391-98 / NVH 391-98), this protein is Riboflavin biosynthesis protein RibBA.